The primary structure comprises 663 residues: MNIEQRVTELHQLLHQYNYEYHVQDNPSVPDSEYDKLLHELIDIEREHPELKTDDSPTVRVGGTPVSAFEKVDHDTPMLSLGNAFSEEDLLAFDKRVKDEVGEVEYMVELKIDGLAVSLKYVDGVFVQGLTRGDGTTGENITQNLKTIHAIPLTLSVPLTFEVRGEAYMPRKSFLALNAYREKVGEPLAANPRNAAAGSLRQLDSKLTAKRKLDIFLYSVNDLRELNAQSQSEALDKLDEIGFKTNHERKLCRNMEEVFEYIKYWTEKRNDLAYDIDGIVIKVNDLSKQDELGFTAKSPKWAIAYKFPAEEVITTLNDIELSIGRTGVVTPTAILEPVKVAGTTVGRASLHNEDLIREKDIRIGDSVVIRKAGEIIPEVVRVVLDRRPEGTKPYNMPEICPSCGHELVRIEGEVALRCINPKCDAKLVEGVIHFVSRTAMNIDGLGERIVEVLYNEDIINDVADLYTLERERLLTLERMGEKKVDKLLAAIEASKTNSLERLLFGLGIRHLGAKASMVLAREFGTMDNLKNATVETLTQIDDIGEKMAQSLVTYLQNEDIINLLEKLEQYGVNMRYTGVTKDDIELHPVFGEKTIVLTGKLTIMSRSEATKALTNLGAKVTNSVTKKTDIVIAGSDAGSKREKADSLGIPVWTEQMMVDALRN.

Residues 31–35 (DSEYD), 80–81 (SL), and Glu-109 contribute to the NAD(+) site. Lys-111 serves as the catalytic N6-AMP-lysine intermediate. Positions 132, 166, 282, and 306 each coordinate NAD(+). Cys-400, Cys-403, Cys-418, and Cys-423 together coordinate Zn(2+). A BRCT domain is found at 585–663 (ELHPVFGEKT…EQMMVDALRN (79 aa)).

It belongs to the NAD-dependent DNA ligase family. LigA subfamily. Mg(2+) is required as a cofactor. The cofactor is Mn(2+).

It catalyses the reaction NAD(+) + (deoxyribonucleotide)n-3'-hydroxyl + 5'-phospho-(deoxyribonucleotide)m = (deoxyribonucleotide)n+m + AMP + beta-nicotinamide D-nucleotide.. In terms of biological role, DNA ligase that catalyzes the formation of phosphodiester linkages between 5'-phosphoryl and 3'-hydroxyl groups in double-stranded DNA using NAD as a coenzyme and as the energy source for the reaction. It is essential for DNA replication and repair of damaged DNA. This Macrococcus caseolyticus (strain JCSC5402) (Macrococcoides caseolyticum) protein is DNA ligase.